The sequence spans 206 residues: 21.9 kDa heat shock protein (206 aa).

Positions 1-29 (MAAVAEREVLGMVAAVAAMVVMMAPPAAA) are cleaved as a signal peptide. The 123-residue stretch at 65 to 187 (EPAAVALARC…GREPRVVAID (123 aa)) folds into the sHSP domain. Positions 94–96 (RGD) match the Cell attachment site motif.

This sequence belongs to the small heat shock protein (HSP20) family. May form oligomeric structures.

It localises to the endoplasmic reticulum. This Oryza sativa subsp. japonica (Rice) protein is 21.9 kDa heat shock protein (HSP21.9).